The sequence spans 492 residues: 3,6-anhydro-alpha-L-galactose dehydrogenase (492 aa).

NADP(+)-binding positions include 160 to 161 (WN), 184 to 187 (KPSE), and 237 to 238 (GS). E259 acts as the Proton acceptor in catalysis. Residue L260 coordinates NADP(+). C293 serves as the catalytic Nucleophile. NADP(+) is bound at residue E394.

Belongs to the aldehyde dehydrogenase family.

The catalysed reaction is 3,6-anhydro-alpha-L-galactopyranose + NADP(+) + H2O = 3,6-anhydro-L-galactonate + NADPH + 2 H(+). Its activity is regulated as follows. Significantly inhibited by EDTA. Activity is enhanced by Fe(2+), but is strongly inhibited by Mn(2+), Cu(2+), Zn(2+), Ni(2+) and Co(2+). Its function is as follows. Involved in the degradation of 3,6-anhydro-L-galactose, which is the major monomeric sugar of red macroalgae. Catalyzes the oxidation of 3,6-anhydro-L-galactose (AHG) to form 3,6-anhydrogalactonate (AHGA). Shows broad substrate specificity, with maximum activity toward AHG. The enzyme activities toward D-fructose, D-galactose and D-ribose are between 40% and 50% of the maximum, but those toward L-rhamnose, L-glyceraldehyde, D-glyceraldehyde, L-fucose and D-glucose are much lower. This chain is 3,6-anhydro-alpha-L-galactose dehydrogenase, found in Streptomyces coelicolor (strain ATCC BAA-471 / A3(2) / M145).